Consider the following 97-residue polypeptide: uncharacterized protein (97 aa).

Residues 58 to 97 (SLLLPRTVQTGGTEREKPGPGQRKRGAHCSACKRSSTRPS) form a disordered region.

This is an uncharacterized protein from Homo sapiens (Human).